The sequence spans 2710 residues: Serine/threonine-protein kinase ATR (2710 aa).

In terms of domain architecture, FAT spans 1647-2257 (TLAKASFRCQ…LWMMAAVSKS (611 aa)). The PI3K/PI4K catalytic domain occupies 2368 to 2680 (IADDAEILNS…GVNAAPSLPL (313 aa)). The interval 2374-2380 (ILNSLQK) is G-loop. The segment at 2545-2553 (GLGDRHGEN) is catalytic loop. An activation loop region spans residues 2565-2589 (HVDFSCLFDKGLLLEKPEVVPFRFT). Positions 2678–2710 (LPLSVEGQARRLIAEAVSHSNLGKMYVWWMAWF) constitute an FATC domain.

The protein belongs to the PI3/PI4-kinase family. ATM subfamily.

Its subcellular location is the nucleus. The enzyme catalyses L-seryl-[protein] + ATP = O-phospho-L-seryl-[protein] + ADP + H(+). The catalysed reaction is L-threonyl-[protein] + ATP = O-phospho-L-threonyl-[protein] + ADP + H(+). Functionally, probable serine/threonine kinase. Seems to play a central role in cell-cycle regulation by transmitting DNA damage signals to downstream effectors of cell-cycle progression. May recognize the substrate consensus sequence [ST]-Q and phosphorylate histone variant H2AX to form H2AXS139ph at sites of DNA damage, thereby regulating DNA damage response mechanism. The polypeptide is Serine/threonine-protein kinase ATR (Oryza sativa subsp. indica (Rice)).